Here is a 462-residue protein sequence, read N- to C-terminus: MSYPPNQGYPPQSNSPQPGQYGAPQQGYPPQQGYPPQQGYPPQQGYPPQQGYPPQQGYPPQQGYPPQQGYPPQQGYPPQQGYPPQQGYPPQQGYPPQQGYPPQQGYPPQQGYPPQQGYPPQGYPPQQGYPPVGVPVGVPVGFAPGMVVGYHQGYFVGTITHDCKHDAEVLRKAMKGIGTNESDLIKVLANRNWAEREQIKREFSAKYSKDLIQDIKSETSGNFEKCLVALLTEPAHFDVEQIHSACAGAGTNENTIIEILVTRSNVQMEYIKQIFKNKHGKSLKDRLESEASGDFKKLLEKLTEPRDESPVINPMQVSKDAEDLYKAGEGKIGTDEKEFIKILTSRSLPHIAAVASEYIKHHKKHSLIKAIDSEFSGSIKTGLIAIVTYALNPYGYFAEILNKSMKGAGTNDNKLIRTVVTQMHNMPQIKTAYSTLFKNSLAHDIQADCSGDFKKLLLDIIS.

The tract at residues 1 to 130 is disordered; it reads MSYPPNQGYP…QGYPPQQGYP (130 aa). A 19 X 6 AA tandem repeats of Q-G-Y-P-P-Q region spans residues 7 to 131; the sequence is QGYPPQSNSP…GYPPQQGYPP (125 aa). A compositionally biased stretch (low complexity) spans 16–130; sequence PQPGQYGAPQ…QGYPPQQGYP (115 aa). 4 Annexin repeats span residues 161-232, 233-304, 315-388, and 392-462; these read HDCK…ALLT, EPAH…KLTE, MQVS…AIVT, and NPYG…DIIS.

Belongs to the annexin family.

Its function is as follows. Calcium/phospholipid-binding protein which promotes membrane fusion and is involved in exocytosis. In Dictyostelium discoideum (Social amoeba), this protein is Annexin A7 (nxnA).